The primary structure comprises 210 residues: Thiamine-phosphate synthase (210 aa).

4-amino-2-methyl-5-(diphosphooxymethyl)pyrimidine-binding positions include 36–40 (QLREK) and N68. The Mg(2+) site is built by D69 and D88. S107 serves as a coordination point for 4-amino-2-methyl-5-(diphosphooxymethyl)pyrimidine. Residue 133-135 (TGS) participates in 2-[(2R,5Z)-2-carboxy-4-methylthiazol-5(2H)-ylidene]ethyl phosphate binding. K136 is a 4-amino-2-methyl-5-(diphosphooxymethyl)pyrimidine binding site. Residues G164 and 184–185 (IS) contribute to the 2-[(2R,5Z)-2-carboxy-4-methylthiazol-5(2H)-ylidene]ethyl phosphate site.

It belongs to the thiamine-phosphate synthase family. Mg(2+) is required as a cofactor.

It catalyses the reaction 2-[(2R,5Z)-2-carboxy-4-methylthiazol-5(2H)-ylidene]ethyl phosphate + 4-amino-2-methyl-5-(diphosphooxymethyl)pyrimidine + 2 H(+) = thiamine phosphate + CO2 + diphosphate. The enzyme catalyses 2-(2-carboxy-4-methylthiazol-5-yl)ethyl phosphate + 4-amino-2-methyl-5-(diphosphooxymethyl)pyrimidine + 2 H(+) = thiamine phosphate + CO2 + diphosphate. It carries out the reaction 4-methyl-5-(2-phosphooxyethyl)-thiazole + 4-amino-2-methyl-5-(diphosphooxymethyl)pyrimidine + H(+) = thiamine phosphate + diphosphate. The protein operates within cofactor biosynthesis; thiamine diphosphate biosynthesis; thiamine phosphate from 4-amino-2-methyl-5-diphosphomethylpyrimidine and 4-methyl-5-(2-phosphoethyl)-thiazole: step 1/1. Its function is as follows. Condenses 4-methyl-5-(beta-hydroxyethyl)thiazole monophosphate (THZ-P) and 2-methyl-4-amino-5-hydroxymethyl pyrimidine pyrophosphate (HMP-PP) to form thiamine monophosphate (TMP). The protein is Thiamine-phosphate synthase of Moorella thermoacetica (strain ATCC 39073 / JCM 9320).